The chain runs to 116 residues: U16-barytoxin-Tl1a (116 aa).

An N-terminal signal peptide occupies residues 1 to 20 (MKTIIVFLSLLVLATKFGDA). Positions 21–74 (KEGVNQEQKKEVTQNEFRVEYLNEMAAMSLLQQLEAIESALFEKEAGRNSRQKR) are excised as a propeptide. 3 disulfide bridges follow: Cys-75-Cys-90, Cys-82-Cys-95, and Cys-89-Cys-110.

Belongs to the neurotoxin 14 (magi-1) family. 06 (ICK-Trit) subfamily. In terms of tissue distribution, expressed by the venom gland.

It is found in the secreted. Its function is as follows. Ion channel inhibitor. The chain is U16-barytoxin-Tl1a from Trittame loki (Brush-footed trapdoor spider).